Here is a 571-residue protein sequence, read N- to C-terminus: GABA-specific permease (571 aa).

Over 1-73 the chain is Cytoplasmic; that stretch reads MSMSSKNENK…IGYKQELKRQ (73 aa). A helical membrane pass occupies residues 74 to 94; sequence FSTLQVFGIAFSIMGLLPSIA. The Vacuolar segment spans residues 95-105; the sequence is SVMGGGLGGGP. Residues 106-126 form a helical membrane-spanning segment; sequence ATLVWGWFVAAFFILLVGITM. The Cytoplasmic segment spans residues 127–153; sequence AEHASSIPTAGGLYYWTYYYAPEGYKE. The chain crosses the membrane as a helical span at residues 154–174; the sequence is IISFIIGCSNSLALAAGVCSI. Topologically, residues 175–198 are vacuolar; sequence DYGLAEEIAAAVTLTKDGNFEVTS. Residues 199–219 traverse the membrane as a helical segment; sequence GKLYGIFAGAVVVMCICTCVA. At 220-228 the chain is on the cytoplasmic side; it reads SGAIARLQT. The chain crosses the membrane as a helical span at residues 229-249; it reads LSIFANLFIIVLLFIALPIGT. At 250-271 the chain is on the vacuolar side; the sequence is KHRMGGFNDGDFIFGKYENLSD. The helical transmembrane segment at 272–292 threads the bilayer; it reads WNNGWQFCLAGFMPAVWTIGS. Over 293-312 the chain is Cytoplasmic; the sequence is FDSCVHQSEEAKDAKKSVPI. Residues 313 to 333 form a helical membrane-spanning segment; sequence GIISSIAVCWILGWLIIICLM. At 334–364 the chain is on the vacuolar side; sequence ACINPDIDSVLDSKYGFALAQIIYDSLGKKW. Residues 365 to 385 form a helical membrane-spanning segment; sequence AIAFMSLIAFCQFLMGASITT. Topologically, residues 386–416 are cytoplasmic; that stretch reads AVSRQVWAFSRDNGLPLSKYIKRVDSKYSVP. The chain crosses the membrane as a helical span at residues 417-437; sequence FFAILAACVGSLILGLLCLID. Residues 438 to 441 are Vacuolar-facing; the sequence is DAAT. The helical transmembrane segment at 442 to 462 threads the bilayer; the sequence is DALFSLAVAGNNLAWSTPTVF. Residues 463 to 482 lie on the Cytoplasmic side of the membrane; the sequence is RLTSGRDLFRPGPFYLGKIW. Residues 483-503 traverse the membrane as a helical segment; it reads SPIVAWTGVAFQLFIIILVMF. At 504 to 514 the chain is on the vacuolar side; sequence PSQQHGITKST. Residues 515–535 form a helical membrane-spanning segment; sequence MNYACVIGPGIWILAGIYYKV. Over 536–571 the chain is Cytoplasmic; the sequence is YKKKYYHGPATNLSDDDYTEAVGADVIDTIMSKQEP.

This sequence belongs to the amino acid-polyamine-organocation (APC) superfamily. Amino acid/choline transporter (ACT) (TC 2.A.3.4) family.

It is found in the vacuole membrane. In terms of biological role, required for high-affinity, high-specificity GABA transport. Also transports putrescine. This is GABA-specific permease (UGA4) from Saccharomyces cerevisiae (strain ATCC 204508 / S288c) (Baker's yeast).